Consider the following 127-residue polypeptide: MERWFWIGLGGAAGTLARYGLSTWCQQRFGAEFPYGTLAVNVIGSFLLGAIGEIAATTELLSPTLRLSLSTGVMGGFTTYSSFNNETIRLIEYKSWAAGLANIAITLVVCLLAGVLGMVVARRLIAG.

2 helical membrane-spanning segments follow: residues Trp-4–Trp-24 and Gly-36–Ala-56. The Na(+) site is built by Gly-75 and Thr-78. A helical transmembrane segment spans residues Leu-100–Val-120.

The protein belongs to the fluoride channel Fluc/FEX (TC 1.A.43) family.

The protein resides in the cell inner membrane. It catalyses the reaction fluoride(in) = fluoride(out). With respect to regulation, na(+) is not transported, but it plays an essential structural role and its presence is essential for fluoride channel function. Its function is as follows. Fluoride-specific ion channel. Important for reducing fluoride concentration in the cell, thus reducing its toxicity. The polypeptide is Fluoride-specific ion channel FluC (Sorangium cellulosum (strain So ce56) (Polyangium cellulosum (strain So ce56))).